The sequence spans 1522 residues: Sodium channel protein 1 brain (1522 aa).

The Cytoplasmic segment spans residues 1–50 (MDEKYTAKNRDKTFVVIEKRFKKNIIHRFSAKRSLFLFTPRNPIRRLAVC). Residues 41–342 (RNPIRRLAVC…VATAYELEVK (302 aa)) form an I repeat. The chain crosses the membrane as a helical span at residues 51 to 70 (IATNVCFDYFLMFTIMINCV). Residues 71–77 (FLAMPDI) lie on the Extracellular side of the membrane. Residues 78-99 (SEFAEYIFLGIYTMEMAIKLVA) form a helical membrane-spanning segment. Residues 100–112 (GGFFIDKYTYLRD) lie on the Cytoplasmic side of the membrane. Residues 113–134 (AWNCLDFTVIMISYITLLLQTI) form a helical membrane-spanning segment. The Extracellular segment spans residues 135–143 (NDKVISDIT). The helical; Voltage-sensor transmembrane segment at 144 to 167 (GLRTFRVLRALRTLSIIPGLKTMV) threads the bilayer. The Cytoplasmic portion of the chain corresponds to 168-179 (NALLRALRMLIS). A helical transmembrane segment spans residues 180 to 201 (VLILILFCLWIFSQAGVQLFGG). The Extracellular portion of the chain corresponds to 202-278 (ALRHKCVLQI…PNYGYTNFDS (77 aa)). C207 and C255 are disulfide-bonded. N-linked (GlcNAc...) asparagine glycans are attached at residues N248 and N258. The segment at residues 279-303 (IGWSMLISFQLLTQDYWEDVYNKVI) is an intramembrane region (pore-forming). Residues 304–308 (RAHSP) are Extracellular-facing. Residues 309–331 (WTVIYFIVINFFGSLYLMNLMLA) form a helical membrane-spanning segment. Residues 332–406 (VVATAYELEV…WLRVQSFAHC (75 aa)) are Cytoplasmic-facing. An II repeat occupies 393-647 (CYNPWLRVQS…EQEVEVSSFA (255 aa)). A helical transmembrane segment spans residues 407–426 (IITDSFTEVFIIFIIVLNTV). At 427–442 (FLAMEHHGMSMELKNV) the chain is on the extracellular side. Residues 443–464 (LKVANYVFTTVFVLEAILKLLA) form a helical membrane-spanning segment. Residues 465–472 (FNKQYFKS) are Cytoplasmic-facing. Residues 473 to 491 (GWNICDLVVVVASLIDLGV) form a helical membrane-spanning segment. Residues 492–498 (EGLKGVS) lie on the Extracellular side of the membrane. Residues 499-522 (VFRSFRLLRVFHLAQSWTTMRLLL) traverse the membrane as a helical; Voltage-sensor segment. Residues 523 to 531 (CIILNTLGS) are Cytoplasmic-facing. The helical transmembrane segment at 532 to 553 (LGYLTIILIIVIYIFAVTGLQL) threads the bilayer. At 554-575 (FHTEYTPDKFRGEPVPRWNFND) the chain is on the extracellular side. The segment at residues 576–596 (FLHSFMMVFRILCGEWIEPMY) is an intramembrane region (pore-forming). Residues 597-607 (DCMRACNGLCF) are Extracellular-facing. A disulfide bridge connects residues C598 and C606. The chain crosses the membrane as a helical span at residues 608-628 (LIFIPVTVFGKTLFFLFIGLV). The Cytoplasmic segment spans residues 629-777 (LGAFGSDTVE…WNNFRRQLMM (149 aa)). The stretch at 770 to 1074 (NFRRQLMMVC…QNYYNTLKKL (305 aa)) is one III repeat. The helical transmembrane segment at 778 to 797 (VCENKYFETGVLVIIFASSI) threads the bilayer. Residues 798-815 (LLAFEDIYLNEKPRLKLA) are Extracellular-facing. Residues 816 to 837 (IFYLDITFCLLFFLEMVLKLVA) form a helical membrane-spanning segment. The Cytoplasmic segment spans residues 838–846 (LGFVHYYTH). The chain crosses the membrane as a helical span at residues 847 to 868 (FWTILDFTIVIITVISLAASGL). The Extracellular segment spans residues 869–874 (GMEQIT). A helical; Voltage-sensor membrane pass occupies residues 875 to 898 (AFRSLRTLRALRPLRAVSRWQGMK). The Cytoplasmic segment spans residues 899-915 (IIVNALMLSIPSIFNVL). A helical membrane pass occupies residues 916 to 937 (LVCVVFWLIFAIMGVQLFAGKF). The Extracellular portion of the chain corresponds to 938–976 (YKCVNETNMRIPPTEVANKIECYNKNYTWVNSNVNFDNV). N-linked (GlcNAc...) asparagine glycans are attached at residues N942 and N963. Residues 977 to 998 (GGAFLALFQVATFEGWMEIMAD) constitute an intramembrane region (pore-forming). At 999–1009 (AVDVTEVDEQP) the chain is on the extracellular side. A helical membrane pass occupies residues 1010-1022 (KFEATVYYYFYFV). Residues 1023–1100 (LFIIFGSFFV…QAVVYDLVMS (78 aa)) lie on the Cytoplasmic side of the membrane. At T1076 the chain carries Phosphothreonine; by PKC. The stretch at 1083-1386 (VKRPKNKCQA…WEQYDPLATQ (304 aa)) is one IV repeat. A helical membrane pass occupies residues 1101–1120 (NQFEIFITTIIITNMIFMAF). Residues 1121 to 1132 (EHYNQSEVVTEV) are Extracellular-facing. The N-linked (GlcNAc...) asparagine glycan is linked to N1124. The chain crosses the membrane as a helical span at residues 1133–1154 (LATANIAFTILYAVEAIIKIIG). The Cytoplasmic segment spans residues 1155-1162 (LRIHYLRN). Residues 1163 to 1184 (LWNVFDFLVVTLSVMDAFLNDI) form a helical membrane-spanning segment. Residues 1185 to 1194 (FGDGIFMNPS) lie on the Extracellular side of the membrane. A helical; Voltage-sensor membrane pass occupies residues 1195-1218 (LLRVARMFRIGRIIRLIKWAKGMR). The Cytoplasmic segment spans residues 1219–1236 (KLLFALVISLPALFNIGA). A helical transmembrane segment spans residues 1237-1258 (LLMLVMFIYTIIGMSSFGQIKL). Residues 1259–1270 (SGALNDQVNFQT) lie on the Extracellular side of the membrane. The segment at residues 1271–1293 (FGKTFLLLVRLATSAGWNDILGP) is an intramembrane region (pore-forming). Residues 1294 to 1323 (LLIQPPNCDPNYITTSTGEKIKVVNGDCGM) are Extracellular-facing. The chain crosses the membrane as a helical span at residues 1324–1346 (PWLAISYMVSYIIIVFMIVFNMY). Residues 1347–1522 (IAVILENFNQ…FIISAPETAV (176 aa)) are Cytoplasmic-facing.

The protein belongs to the sodium channel (TC 1.A.1.10) family.

The protein localises to the cell membrane. Functionally, mediates the voltage-dependent sodium ion permeability of excitable membranes. Assuming opened or closed conformations in response to the voltage difference across the membrane, the protein forms a sodium-selective channel through which Na(+) ions may pass in accordance with their electrochemical gradient. The polypeptide is Sodium channel protein 1 brain (Heterololigo bleekeri (Spear squid)).